Here is a 333-residue protein sequence, read N- to C-terminus: B3 domain-containing transcription factor NGA4 (333 aa).

The TF-B3 DNA-binding region spans 36–145 (FDKVLTPSDV…KIMFIDWRPR (110 aa)). The segment at 268–333 (VEESSSSGDT…YKRKGKSLEL (66 aa)) is disordered. Residues 323 to 333 (EYKRKGKSLEL) show a composition bias toward basic and acidic residues.

It is found in the nucleus. In terms of biological role, regulates lateral organ growth. Functionally redundant with NGA1, NGA2 and NGA3. The polypeptide is B3 domain-containing transcription factor NGA4 (NGA4) (Arabidopsis thaliana (Mouse-ear cress)).